We begin with the raw amino-acid sequence, 578 residues long: Proline--tRNA ligase (578 aa).

This sequence belongs to the class-II aminoacyl-tRNA synthetase family. ProS type 1 subfamily. As to quaternary structure, homodimer.

It is found in the cytoplasm. It carries out the reaction tRNA(Pro) + L-proline + ATP = L-prolyl-tRNA(Pro) + AMP + diphosphate. Its function is as follows. Catalyzes the attachment of proline to tRNA(Pro) in a two-step reaction: proline is first activated by ATP to form Pro-AMP and then transferred to the acceptor end of tRNA(Pro). As ProRS can inadvertently accommodate and process non-cognate amino acids such as alanine and cysteine, to avoid such errors it has two additional distinct editing activities against alanine. One activity is designated as 'pretransfer' editing and involves the tRNA(Pro)-independent hydrolysis of activated Ala-AMP. The other activity is designated 'posttransfer' editing and involves deacylation of mischarged Ala-tRNA(Pro). The misacylated Cys-tRNA(Pro) is not edited by ProRS. This is Proline--tRNA ligase from Paraburkholderia xenovorans (strain LB400).